The following is a 312-amino-acid chain: Olfactory receptor 1J21 (312 aa).

7 helical membrane passes run 29 to 49 (ALFLAMYLTTVLGNLLIILLI), 58 to 78 (PMYFFLSHLAFTDISFSSVTA), 95 to 115 (AGCVSQIYFFLLFGCIDNFLL), 143 to 163 (LLVMVSWAFSSSNGLVHTLLF), 197 to 217 (LVILTLAVVVITVPFICILVS), 241 to 261 (CGSHLCVVSLYYGAIIGLYFF), and 272 to 292 (VIVAVLYTVVTPMLNPFIYSL).

Belongs to the G-protein coupled receptor 1 family.

It localises to the cell membrane. In terms of biological role, odorant receptor. Activated by (+) and (-)-carvone. The polypeptide is Olfactory receptor 1J21 (Mus musculus (Mouse)).